Consider the following 682-residue polypeptide: Iron-phytosiderophore transporter yellow stripe 1 (682 aa).

A disordered region spans residues 1–36; that stretch reads MDLARRGGAAGADDEGEIERHEPAPEDMESDPAAAR. Helical transmembrane passes span 56 to 76, 79 to 99, 124 to 144, 167 to 187, 236 to 256, 288 to 308, 334 to 354, 396 to 416, 428 to 448, 460 to 480, 514 to 534, 549 to 569, 574 to 594, 612 to 632, and 640 to 660; these read GVVAALLIGFMYSVIVMKIAL, GLVPTLNVSAALMAFLALRGW, CAVACYTIAFGGGFGSTLLGL, GFGWMAGFVAAISFAGLLSLI, LSFVWSFFQWFYTGGEVCGFV, LVNISTLLGAILSWGILWPLI, FLCIALIMGDGTYHFFKVFGV, FPAWAAYAGYAALTVVSAVII, VIVAYVLAPLLGFANSYGTGL, IALFIFAAWAGRDNGVIAGLA, VAQFIGTAMGCVVAPLTFLLF, APYGLIYRNMAILGVEGFSVL, LALSAGFFAFAFVFSVARDVL, FLVGGSFAIDMCVGSLAVFVW, and AVFMVPAVASGLICGDGIWTF.

Belongs to the YSL (TC 2.A.67.2) family. As to expression, expressed in roots of young maize seedlings. Not detected in leaves of iron-sufficient plants, but accumulates in roots and leaves of iron-deficient plants.

The protein resides in the membrane. In terms of biological role, involved in Fe(3+) uptake. Acts as a proton-coupled symporter for phytosiderophore- and nicotianamine-chelated metals. Capable of transporting either Fe(2+)-nicotianamine or Fe(3+)-phytosiderophore. May transport iron, zinc, nickel, copper and, at a lower rate, manganese and cadmium. In Zea mays (Maize), this protein is Iron-phytosiderophore transporter yellow stripe 1 (YS1).